A 226-amino-acid chain; its full sequence is MKKAVILISGGLDSTTCLAVAKSKGFSCYALSFDYGQKHHSELVAAEKIAAHFNVVRYEVVTLSIGKLGGSALTDNSLDVPDYGGNESIPITYVPARNTIFLSIALGWAEILDAESILIGASAIDYSGYPDCRPEYIAAFQNLANLATKRGIEGHSIKIEAPLIHLSKAETIKLGYSLGVDYSMTVSCYRANEEGLACGYCDSCELRKKGFKEAEIKDPTQYITKV.

8-18 (ISGGLDSTTCL) lines the ATP pocket. Cysteine 188, cysteine 198, cysteine 201, and cysteine 204 together coordinate Zn(2+).

This sequence belongs to the QueC family. It depends on Zn(2+) as a cofactor.

The catalysed reaction is 7-carboxy-7-deazaguanine + NH4(+) + ATP = 7-cyano-7-deazaguanine + ADP + phosphate + H2O + H(+). It participates in purine metabolism; 7-cyano-7-deazaguanine biosynthesis. Its function is as follows. Catalyzes the ATP-dependent conversion of 7-carboxy-7-deazaguanine (CDG) to 7-cyano-7-deazaguanine (preQ(0)). The protein is 7-cyano-7-deazaguanine synthase of Coxiella burnetii (strain RSA 493 / Nine Mile phase I).